Here is a 458-residue protein sequence, read N- to C-terminus: Bifunctional protein GlmU (458 aa).

The segment at 1-230 (MLQVDVVILA…DWEVSGVNDK (230 aa)) is pyrophosphorylase. UDP-N-acetyl-alpha-D-glucosamine contacts are provided by residues 9–12 (LAAG), Lys23, Gln75, and 80–81 (GT). Residue Asp104 participates in Mg(2+) binding. UDP-N-acetyl-alpha-D-glucosamine-binding residues include Gly139, Glu155, Asn170, and Asn228. Residue Asn228 coordinates Mg(2+). The tract at residues 231 to 251 (IQLSILERAHQQDTANRLMEQ) is linker. The segment at 252-458 (GVMFADPARF…NWKRPRKDRN (207 aa)) is N-acetyltransferase. 2 residues coordinate UDP-N-acetyl-alpha-D-glucosamine: Arg334 and Lys352. His364 serves as the catalytic Proton acceptor. 2 residues coordinate UDP-N-acetyl-alpha-D-glucosamine: Tyr367 and Asn378. Residues Ala381, 387–388 (NY), Ser406, Ala424, and Arg441 each bind acetyl-CoA.

The protein in the N-terminal section; belongs to the N-acetylglucosamine-1-phosphate uridyltransferase family. In the C-terminal section; belongs to the transferase hexapeptide repeat family. As to quaternary structure, homotrimer. Mg(2+) serves as cofactor.

Its subcellular location is the cytoplasm. It catalyses the reaction alpha-D-glucosamine 1-phosphate + acetyl-CoA = N-acetyl-alpha-D-glucosamine 1-phosphate + CoA + H(+). The catalysed reaction is N-acetyl-alpha-D-glucosamine 1-phosphate + UTP + H(+) = UDP-N-acetyl-alpha-D-glucosamine + diphosphate. It participates in nucleotide-sugar biosynthesis; UDP-N-acetyl-alpha-D-glucosamine biosynthesis; N-acetyl-alpha-D-glucosamine 1-phosphate from alpha-D-glucosamine 6-phosphate (route II): step 2/2. It functions in the pathway nucleotide-sugar biosynthesis; UDP-N-acetyl-alpha-D-glucosamine biosynthesis; UDP-N-acetyl-alpha-D-glucosamine from N-acetyl-alpha-D-glucosamine 1-phosphate: step 1/1. Its pathway is bacterial outer membrane biogenesis; LPS lipid A biosynthesis. Its function is as follows. Catalyzes the last two sequential reactions in the de novo biosynthetic pathway for UDP-N-acetylglucosamine (UDP-GlcNAc). The C-terminal domain catalyzes the transfer of acetyl group from acetyl coenzyme A to glucosamine-1-phosphate (GlcN-1-P) to produce N-acetylglucosamine-1-phosphate (GlcNAc-1-P), which is converted into UDP-GlcNAc by the transfer of uridine 5-monophosphate (from uridine 5-triphosphate), a reaction catalyzed by the N-terminal domain. The protein is Bifunctional protein GlmU of Nitrosomonas europaea (strain ATCC 19718 / CIP 103999 / KCTC 2705 / NBRC 14298).